Reading from the N-terminus, the 325-residue chain is Aldo-keto reductase family 1 member D1 (325 aa).

NADP(+)-binding positions include 22 to 26 (GLGTY) and aspartate 52. Residue tyrosine 26 participates in substrate binding. 4 residues coordinate substrate: tyrosine 57, tryptophan 88, glutamate 119, and tyrosine 131. Tyrosine 57 (proton donor) is an active-site residue. Residues 168–169 (SN), glutamine 192, and 218–223 (HSPLGT) contribute to the NADP(+) site. Phosphoserine is present on serine 228. Residue tryptophan 229 coordinates substrate. 272-282 (KSFTPERIKEN) is a binding site for NADP(+).

Belongs to the aldo/keto reductase family.

It localises to the cytoplasm. The catalysed reaction is 5beta-cholestan-3-one + NADP(+) = cholest-4-en-3-one + NADPH + H(+). The enzyme catalyses 4,5beta-dihydrocortisone + NADP(+) = cortisone + NADPH + H(+). It catalyses the reaction cortisol + NADPH + H(+) = 5beta-dihydrocortisol + NADP(+). It carries out the reaction corticosterone + NADPH + H(+) = 5beta-dihydrocorticosterone + NADP(+). The catalysed reaction is 7alpha,12alpha-dihydroxycholest-4-en-3-one + NADPH + H(+) = 7alpha,12alpha-dihydroxy-5beta-cholestan-3-one + NADP(+). The enzyme catalyses 7alpha-hydroxycholest-4-en-3-one + NADPH + H(+) = 7alpha-hydroxy-5beta-cholestan-3-one + NADP(+). It catalyses the reaction epitestosterone + NADPH + H(+) = 5beta-dihydroepitestosterone + NADP(+). It carries out the reaction androst-4-ene-3,17-dione + NADPH + H(+) = 5beta-androstane-3,17-dione + NADP(+). The catalysed reaction is progesterone + NADPH + H(+) = 5beta-pregnan-3,20-dione + NADP(+). The enzyme catalyses 21-hydroxyprogesterone + NADPH + H(+) = 5beta-dihydrodeoxycorticosterone + NADP(+). It catalyses the reaction aldosterone + NADPH + H(+) = 5beta-dihydroaldosterone + NADP(+). It carries out the reaction 17beta-hydroxyandrosta-1,4-dien-3-one + NADPH + H(+) = 17beta-hydroxy-5beta-androst-1-en-3-one + NADP(+). The catalysed reaction is 17beta-hydroxyestr-4-en-3-one + NADPH + H(+) = 17beta-hydroxy-5beta-estran-3-one + NADP(+). The enzyme catalyses 5beta-dihydrotestosterone + NADP(+) = testosterone + NADPH + H(+). It catalyses the reaction androst-4-ene-3,11,17-trione + NADPH + H(+) = 17beta-hydroxyandrost-4-ene-3,11-dione + NADP(+). Its activity is regulated as follows. Subject to inhibition by high substrate concentrations. Inhibited by testosterone concentrations above 10 uM. Inhibited by the primary and secondary bile acids chenodeoxycholic acid and ursodeoxycholic acid. Its function is as follows. Catalyzes the stereospecific NADPH-dependent reduction of the C4-C5 double bond of bile acid intermediates and steroid hormones carrying a delta(4)-3-one structure to yield an A/B cis-ring junction. This cis-configuration is crucial for bile acid biosynthesis and plays important roles in steroid metabolism. Capable of reducing a broad range of delta-(4)-3-ketosteroids from C18 (such as, 17beta-hydroxyestr-4-en-3-one) to C27 (such as, 7alpha-hydroxycholest-4-en-3-one). This is Aldo-keto reductase family 1 member D1 (Akr1d1) from Mus musculus (Mouse).